We begin with the raw amino-acid sequence, 107 residues long: Phosphoribosyl-ATP pyrophosphatase (107 aa).

The protein belongs to the PRA-PH family.

Its subcellular location is the cytoplasm. It carries out the reaction 1-(5-phospho-beta-D-ribosyl)-ATP + H2O = 1-(5-phospho-beta-D-ribosyl)-5'-AMP + diphosphate + H(+). Its pathway is amino-acid biosynthesis; L-histidine biosynthesis; L-histidine from 5-phospho-alpha-D-ribose 1-diphosphate: step 2/9. The sequence is that of Phosphoribosyl-ATP pyrophosphatase from Brucella abortus (strain S19).